Reading from the N-terminus, the 473-residue chain is Flagellum-specific ATP synthase (473 aa).

187–194 (AGSGVGKS) contacts ATP.

Belongs to the ATPase alpha/beta chains family.

It is found in the cytoplasm. The catalysed reaction is ATP + H2O + 4 H(+)(in) = ADP + phosphate + 5 H(+)(out). Probable catalytic subunit of a protein translocase for flagellum-specific export, or a proton translocase involved in local circuits at the flagellum. This Agrobacterium fabrum (strain C58 / ATCC 33970) (Agrobacterium tumefaciens (strain C58)) protein is Flagellum-specific ATP synthase (fliI).